The sequence spans 227 residues: Cytidylate kinase (227 aa).

An ATP-binding site is contributed by 12–20 (GPSGAGKGT).

It belongs to the cytidylate kinase family. Type 1 subfamily.

It localises to the cytoplasm. The enzyme catalyses CMP + ATP = CDP + ADP. It carries out the reaction dCMP + ATP = dCDP + ADP. This Shigella boydii serotype 18 (strain CDC 3083-94 / BS512) protein is Cytidylate kinase.